The primary structure comprises 599 residues: Peptidyl-Asp metalloendopeptidase (599 aa).

An N-terminal signal peptide occupies residues 1–20; it reads MKKSLLCSTLALAVASAAQA. Histidine 164 contacts Zn(2+). Glutamate 165 is an active-site residue. 2 residues coordinate Zn(2+): histidine 168 and histidine 174. Positions 265–285 are disordered; it reads PTKVPGTVNPGSGGDTPTPPD. The 126-residue stretch at 458-583 folds into the CBM-cenC domain; it reads YDFESGIGGW…KRAELMILSG (126 aa).

Belongs to the peptidase M72 family. As to quaternary structure, interacts with BamI, the product of its coregulated adjacent gene, which inhibits its protease activity. Zn(2+) is required as a cofactor. In terms of processing, made as a membrane-associated pre-pro-protein, which is exported to the periplasm with removal of the signal peptide, leading to a protein with a molecular mass of 65 kDa, that likely contains the metzincin domain plus tandem carbohydrate-binding domains. Undergoes processing during export to the extracellular milieu, probably by autocatalysis, yielding a (mature length) 25 kDa protein that most likely corresponds to the metzincin domain only.

It localises to the secreted. The enzyme catalyses Cleavage of Xaa-|-Asp, Xaa-|-Glu and Xaa-|-cysteic acid bonds.. Is inhibited by BamI, the product of its coregulated adjacent gene. Metalloprotease with endopeptidase activity. Specifically cleaves on the N-terminal side of aspartyl, glutamyl and cysteic acid residues. Mep72 appears to be a secreted biofilm-specific regulator that affects the processing of a very specific subset of virulence factors exported by the type III secretion machinery as well as flagellar proteins. Binds directly to ExoS and PcrV and affects the processing of these proteins in the biofilm secretome, but contrary to expectation, Mep72 seems to protect these targets against proteolytic processing/degradation. The sequence is that of Peptidyl-Asp metalloendopeptidase from Pseudomonas aeruginosa (strain ATCC 15692 / DSM 22644 / CIP 104116 / JCM 14847 / LMG 12228 / 1C / PRS 101 / PAO1).